A 414-amino-acid chain; its full sequence is Arrestin domain-containing protein 3 (414 aa).

2 consecutive short sequence motifs (PPxY motif) follow at residues 346-349 (PPSY) and 391-394 (PPLY). Positions 393-414 (LYSEIDPNPDQSADDRPSCPSR) are disordered. Residues 405–414 (ADDRPSCPSR) are compositionally biased toward basic and acidic residues.

The protein belongs to the arrestin family. Interacts (via PPxY motifs) with NEDD4 (via WW domains). Interacts with ADRB2. Interacts with ADRB3. Interacts with HGS (via PPxY motifs). Does not bind TXN (thioredoxin). Interacts with ITCH. Interacts with WWP1 (via WW domains). As to expression, highly expressed in skeletal muscle, placenta, kidney, lung, liver, blood, adrenal gland, lymph node, mammary gland, thyroid, and trachea. Very low levels in colon, thymus, spleen, small intestine, bladder and bone marrow. Strong expression in differentiated adipocytes compared to preadipocytes. Detected in omental fat and subcutaneous fat tissue.

It localises to the cytoplasm. The protein localises to the cell membrane. It is found in the lysosome. Its subcellular location is the endosome. The protein resides in the early endosome. Adapter protein that plays a role in regulating cell-surface expression of adrenergic receptors and probably also other G protein-coupled receptors. Plays a role in NEDD4-mediated ubiquitination and endocytosis af activated ADRB2 and subsequent ADRB2 degradation. May recruit NEDD4 to ADRB2. Alternatively, may function as adapter protein that does not play a major role in recruiting NEDD4 to ADRB2, but rather plays a role in a targeting ADRB2 to endosomes. This chain is Arrestin domain-containing protein 3 (ARRDC3), found in Homo sapiens (Human).